An 859-amino-acid chain; its full sequence is Nitrate reductase [NADPH] (859 aa).

A Mo-molybdopterin-binding site is contributed by cysteine 137. The 77-residue stretch at 502–578 (DVVIKYSEFE…LPSMHLGRLE (77 aa)) folds into the Cytochrome b5 heme-binding domain. Heme is bound by residues histidine 538 and histidine 561. The FAD-binding FR-type domain maps to 602 to 713 (RKWHKITLAE…KGPVGEFEYV (112 aa)). Residues 655–658 (RAYT), 672–676 (LIKVY), phenylalanine 677, 687–689 (IMT), serine 737, and threonine 740 each bind FAD. 829–838 (MLLVCGPPGM) is an NADP(+) binding site.

It belongs to the nitrate reductase family. In terms of assembly, homodimer. FAD serves as cofactor. The cofactor is heme. It depends on Mo-molybdopterin as a cofactor.

It catalyses the reaction nitrite + NADP(+) + H2O = nitrate + NADPH + H(+). Functionally, nitrate reductase is a key enzyme involved in the first step of nitrate assimilation in plants, fungi and bacteria. The protein is Nitrate reductase [NADPH] (YNR1) of Pichia angusta (Yeast).